Consider the following 450-residue polypeptide: 23S rRNA (uracil(1939)-C(5))-methyltransferase RlmD (450 aa).

Residues 1–22 (MAKHDRGLRFQPAGGSRAPQIP) are disordered. The TRAM domain maps to 20-78 (QIPVGKKQRLTIQRLANDGRGIAFVEGRTWFVSGALAGEEVEARVLGSHGKVVEARAER). Cysteine 91, cysteine 97, cysteine 100, and cysteine 179 together coordinate [4Fe-4S] cluster. Residues glutamine 283, phenylalanine 312, asparagine 317, glutamate 333, aspartate 360, and aspartate 381 each coordinate S-adenosyl-L-methionine. The Nucleophile role is filled by cysteine 407.

It belongs to the class I-like SAM-binding methyltransferase superfamily. RNA M5U methyltransferase family. RlmD subfamily.

It catalyses the reaction uridine(1939) in 23S rRNA + S-adenosyl-L-methionine = 5-methyluridine(1939) in 23S rRNA + S-adenosyl-L-homocysteine + H(+). Its function is as follows. Catalyzes the formation of 5-methyl-uridine at position 1939 (m5U1939) in 23S rRNA. The polypeptide is 23S rRNA (uracil(1939)-C(5))-methyltransferase RlmD (Pseudomonas fluorescens (strain ATCC BAA-477 / NRRL B-23932 / Pf-5)).